A 201-amino-acid chain; its full sequence is Pyridoxal 5'-phosphate synthase subunit PdxT (201 aa).

50-52 (GES) serves as a coordination point for L-glutamine. The Nucleophile role is filled by C82. L-glutamine contacts are provided by residues R111 and 139–140 (IR). Active-site charge relay system residues include H180 and E182.

This sequence belongs to the glutaminase PdxT/SNO family. As to quaternary structure, in the presence of PdxS, forms a dodecamer of heterodimers. Only shows activity in the heterodimer.

The catalysed reaction is aldehydo-D-ribose 5-phosphate + D-glyceraldehyde 3-phosphate + L-glutamine = pyridoxal 5'-phosphate + L-glutamate + phosphate + 3 H2O + H(+). It carries out the reaction L-glutamine + H2O = L-glutamate + NH4(+). Its pathway is cofactor biosynthesis; pyridoxal 5'-phosphate biosynthesis. Functionally, catalyzes the hydrolysis of glutamine to glutamate and ammonia as part of the biosynthesis of pyridoxal 5'-phosphate. The resulting ammonia molecule is channeled to the active site of PdxS. This chain is Pyridoxal 5'-phosphate synthase subunit PdxT, found in Nocardioides sp. (strain ATCC BAA-499 / JS614).